A 303-amino-acid chain; its full sequence is Bifunctional protein FolD (303 aa).

NADP(+)-binding positions include 175–177 (GVS) and I243.

The protein belongs to the tetrahydrofolate dehydrogenase/cyclohydrolase family. As to quaternary structure, homodimer.

It carries out the reaction (6R)-5,10-methylene-5,6,7,8-tetrahydrofolate + NADP(+) = (6R)-5,10-methenyltetrahydrofolate + NADPH. The enzyme catalyses (6R)-5,10-methenyltetrahydrofolate + H2O = (6R)-10-formyltetrahydrofolate + H(+). Its pathway is one-carbon metabolism; tetrahydrofolate interconversion. In terms of biological role, catalyzes the oxidation of 5,10-methylenetetrahydrofolate to 5,10-methenyltetrahydrofolate and then the hydrolysis of 5,10-methenyltetrahydrofolate to 10-formyltetrahydrofolate. The chain is Bifunctional protein FolD from Xanthomonas euvesicatoria pv. vesicatoria (strain 85-10) (Xanthomonas campestris pv. vesicatoria).